A 27-amino-acid polypeptide reads, in one-letter code: DELTA-pseudomyrmecitoxin-Pp1a subunit A (27 aa).

As to quaternary structure, heterodimer composed of subunit A and subunit B (DELTA-PSDTX-Pp1a); disulfide-linked. Expressed by the venom gland.

The protein localises to the secreted. Its function is as follows. This heterodimer has insecticidal and cytotoxic properties. Induces immediate paralysis when injected into blowflies (Lucilia cuprina), and then death within 24 hours. Also inhibits the growth of Aedes albopictus mosquito C6/36 cells. The sequence is that of DELTA-pseudomyrmecitoxin-Pp1a subunit A from Pseudomyrmex penetrator (Ant).